The chain runs to 644 residues: Threonine--tRNA ligase (644 aa).

The TGS domain maps to 1 to 62 (MSFSITLPDG…DSDSEVAIIT (62 aa)). Positions 240-538 (DHRTIGRDLD…LTEIYKGAFP (299 aa)) are catalytic. Residues C334, H385, and H515 each coordinate Zn(2+).

It belongs to the class-II aminoacyl-tRNA synthetase family. As to quaternary structure, homodimer. Zn(2+) serves as cofactor.

The protein localises to the cytoplasm. The catalysed reaction is tRNA(Thr) + L-threonine + ATP = L-threonyl-tRNA(Thr) + AMP + diphosphate + H(+). Its function is as follows. Catalyzes the attachment of threonine to tRNA(Thr) in a two-step reaction: L-threonine is first activated by ATP to form Thr-AMP and then transferred to the acceptor end of tRNA(Thr). Also edits incorrectly charged L-seryl-tRNA(Thr). The chain is Threonine--tRNA ligase from Lactobacillus helveticus (strain DPC 4571).